We begin with the raw amino-acid sequence, 804 residues long: Enhancer of polycomb homolog 2 (804 aa).

4 disordered regions span residues 372 to 395 (QSSD…ENDP), 484 to 508 (GFSS…DRHC), 603 to 624 (QSQQ…SDCM), and 646 to 669 (PVRS…VQPS). Composition is skewed to polar residues over residues 611-624 (SHPK…SDCM) and 654-669 (DQNA…VQPS).

Belongs to the enhancer of polycomb family.

The protein localises to the nucleus. In terms of biological role, may play a role in transcription or DNA repair. The polypeptide is Enhancer of polycomb homolog 2 (epc2) (Xenopus laevis (African clawed frog)).